The sequence spans 435 residues: Mitochondrial association factor 1 form b0 (435 aa).

The signal sequence occupies residues 1 to 27 (MWRIWRCRLSFLFVTGCLLGALTAGLG). Topologically, residues 28-96 (SQMSDSVGRN…VTARRRRNRR (69 aa)) are vacuolar. The interval 43–89 (GVADASQEAGDVVEERTERTEEQVFAPGPPRRHSSESLFPRNPSVTA) is disordered. A compositionally biased stretch (basic and acidic residues) spans 55-64 (VEERTERTEE). Residues 97-117 (ITLIATAVGVAVILAALYVLR) traverse the membrane as a helical segment. Residues 118–435 (RRRAQPPQEP…ESTYLASMLD (318 aa)) are Cytoplasmic-facing. The segment at 120–162 (RAQPPQEPEPPTRLRTPRPRAPSGQQQPSESEPPAGVPMKPGS) is disordered.

It localises to the parasitophorous vacuole membrane. During host cell infection by tachyzoites, does not play a role in tethering the parasitophorous vacuole to the host mitochondria. In Toxoplasma gondii, this protein is Mitochondrial association factor 1 form b0.